Consider the following 359-residue polypeptide: MITVQVDLQERSYPIYIGSGLLKQNSLLAKHIVGSEVMVVTNETVAPLYLDTLLKGLKDYRCAEIILPDGEQHKTLAVLQQIFDDLLKVPFSRHCTVIALGGGVIGDMAGFAAACYQRGVAYIQVPTTLLAQVDSSVGGKTAVNHPLGKNMIGAFYQPRCVLADTDTLDTLDERQLRAGLAEVIKYGLIRDIDFFTWLEEHASEVLAREPSALIHAIERSCRNKAEIVAADERESGVRAILNLGHTFGHAIETGLGYGAWLHGEAVAAGMAMAADLSQRLGWLSATEVGRVLNLLERAGLPRHSPEAIHKARFLELMAVDKKVIDGCLRLVLLRQLGQAVVTDGFDSDLLEATIDKATV.

Residues 69–74 (DGEQHK), 103–107 (GVIGD), 127–128 (TT), K140, K149, and 167–170 (TLDT) contribute to the NAD(+) site. Residues E182, H245, and H262 each coordinate Zn(2+).

The protein belongs to the sugar phosphate cyclases superfamily. Dehydroquinate synthase family. Co(2+) serves as cofactor. The cofactor is Zn(2+). It depends on NAD(+) as a cofactor.

It localises to the cytoplasm. It catalyses the reaction 7-phospho-2-dehydro-3-deoxy-D-arabino-heptonate = 3-dehydroquinate + phosphate. Its pathway is metabolic intermediate biosynthesis; chorismate biosynthesis; chorismate from D-erythrose 4-phosphate and phosphoenolpyruvate: step 2/7. Its function is as follows. Catalyzes the conversion of 3-deoxy-D-arabino-heptulosonate 7-phosphate (DAHP) to dehydroquinate (DHQ). This chain is 3-dehydroquinate synthase, found in Nitrosococcus oceani (strain ATCC 19707 / BCRC 17464 / JCM 30415 / NCIMB 11848 / C-107).